A 185-amino-acid polypeptide reads, in one-letter code: Ribosome-recycling factor (185 aa).

A disordered region spans residues 137-158 (DELKKLEKDHTASEDEVKRAQD).

Belongs to the RRF family.

Its subcellular location is the cytoplasm. Functionally, responsible for the release of ribosomes from messenger RNA at the termination of protein biosynthesis. May increase the efficiency of translation by recycling ribosomes from one round of translation to another. The polypeptide is Ribosome-recycling factor (Desulfitobacterium hafniense (strain Y51)).